Consider the following 82-residue polypeptide: Photosystem I iron-sulfur center (82 aa).

2 4Fe-4S ferredoxin-type domains span residues 2-31 and 37-68; these read SHTV…MVPW and GQIA…VRVY. Residues C11, C14, C17, C21, C48, C51, C54, and C58 each coordinate [4Fe-4S] cluster.

In terms of assembly, the eukaryotic PSI reaction center is composed of at least 11 subunits. [4Fe-4S] cluster serves as cofactor.

Its subcellular location is the plastid. It localises to the chloroplast thylakoid membrane. It catalyses the reaction reduced [plastocyanin] + hnu + oxidized [2Fe-2S]-[ferredoxin] = oxidized [plastocyanin] + reduced [2Fe-2S]-[ferredoxin]. Its function is as follows. Apoprotein for the two 4Fe-4S centers FA and FB of photosystem I (PSI); essential for photochemical activity. FB is the terminal electron acceptor of PSI, donating electrons to ferredoxin. The C-terminus interacts with PsaA/B/D and helps assemble the protein into the PSI complex. Required for binding of PsaD and PsaE to PSI. PSI is a plastocyanin/cytochrome c6-ferredoxin oxidoreductase, converting photonic excitation into a charge separation, which transfers an electron from the donor P700 chlorophyll pair to the spectroscopically characterized acceptors A0, A1, FX, FA and FB in turn. This Trieres chinensis (Marine centric diatom) protein is Photosystem I iron-sulfur center.